We begin with the raw amino-acid sequence, 120 residues long: Ribonuclease P protein component (120 aa).

The protein belongs to the RnpA family. Consists of a catalytic RNA component (M1 or rnpB) and a protein subunit.

The catalysed reaction is Endonucleolytic cleavage of RNA, removing 5'-extranucleotides from tRNA precursor.. Functionally, RNaseP catalyzes the removal of the 5'-leader sequence from pre-tRNA to produce the mature 5'-terminus. It can also cleave other RNA substrates such as 4.5S RNA. The protein component plays an auxiliary but essential role in vivo by binding to the 5'-leader sequence and broadening the substrate specificity of the ribozyme. The protein is Ribonuclease P protein component of Mycobacterium leprae (strain Br4923).